The primary structure comprises 239 residues: Ribonuclease 3 (239 aa).

The RNase III domain maps to 18–141 (YTTLEKALGY…LMAGVYLEAG (124 aa)). Mg(2+) is bound at residue Glu54. Residue Asp58 is part of the active site. 2 residues coordinate Mg(2+): Ser127 and Glu130. Residue Glu130 is part of the active site. Positions 168–237 (DYKTALQELT…AYQALQKLKE (70 aa)) constitute a DRBM domain.

The protein belongs to the ribonuclease III family. In terms of assembly, homodimer. Requires Mg(2+) as cofactor.

The protein resides in the cytoplasm. The catalysed reaction is Endonucleolytic cleavage to 5'-phosphomonoester.. Functionally, digests double-stranded RNA. Involved in the processing of primary rRNA transcript to yield the immediate precursors to the large and small rRNAs (23S and 16S). Processes some mRNAs, and tRNAs when they are encoded in the rRNA operon. Processes pre-crRNA and tracrRNA of type II CRISPR loci if present in the organism. This Helicobacter pylori (strain ATCC 700392 / 26695) (Campylobacter pylori) protein is Ribonuclease 3.